The chain runs to 203 residues: MNKLTQGKFITFEGMDGIGKSTQSKMLYEYLKSQKIPVILTREVGGTFVAEKMREILVHEELLPMSELLQAMAARYDHMVRKIIPALKDGYIVICDRFIDSTACYQGLELENGIDLVYSLHTTLMPSLMPDITFFIDVEPDTAIKRVNSRNMSNKFDRRRIDFYKKIYSCFQELSHRFPERIKTIKASHLNPLEVHELIQKHL.

14–21 (GMDGIGKS) contributes to the ATP binding site.

Belongs to the thymidylate kinase family.

The catalysed reaction is dTMP + ATP = dTDP + ADP. In terms of biological role, phosphorylation of dTMP to form dTDP in both de novo and salvage pathways of dTTP synthesis. The chain is Thymidylate kinase from Rickettsia typhi (strain ATCC VR-144 / Wilmington).